Here is a 1080-residue protein sequence, read N- to C-terminus: Carbamoyl phosphate synthase large chain (1080 aa).

The interval 1–403 (MPKRTDLKTI…SLQKALRGLE (403 aa)) is carboxyphosphate synthetic domain. ATP is bound by residues Arg-129, Arg-169, Gly-175, Gly-176, Glu-208, Val-210, Glu-215, Gly-241, Val-242, His-243, Gln-285, and Glu-299. The ATP-grasp 1 domain maps to 133-328 (RVAMGEIGLD…IAKVAAKLAV (196 aa)). 3 residues coordinate Mg(2+): Gln-285, Glu-299, and Asn-301. Gln-285, Glu-299, and Asn-301 together coordinate Mn(2+). The interval 404-554 (TGKIGLDPTG…YSTYEDECEA (151 aa)) is oligomerization domain. Positions 555–942 (LPSNRDKIMI…AFARAQEAGG (388 aa)) are carbamoyl phosphate synthetic domain. Positions 679–876 (QQLVDKLGLK…LAKIAARCMA (198 aa)) constitute an ATP-grasp 2 domain. ATP-binding residues include Arg-715, Arg-754, Leu-756, Glu-761, Gly-787, Val-788, His-789, Ser-790, Gln-830, and Glu-847. Mg(2+) is bound by residues Gln-830, Glu-847, and Asn-849. Mn(2+)-binding residues include Gln-830, Glu-847, and Asn-849. The MGS-like domain maps to 943-1080 (IKAPPLGKAF…LQELHKELEA (138 aa)). The allosteric domain stretch occupies residues 943–1080 (IKAPPLGKAF…LQELHKELEA (138 aa)).

It belongs to the CarB family. In terms of assembly, composed of two chains; the small (or glutamine) chain promotes the hydrolysis of glutamine to ammonia, which is used by the large (or ammonia) chain to synthesize carbamoyl phosphate. Tetramer of heterodimers (alpha,beta)4. Mg(2+) is required as a cofactor. Mn(2+) serves as cofactor.

It carries out the reaction hydrogencarbonate + L-glutamine + 2 ATP + H2O = carbamoyl phosphate + L-glutamate + 2 ADP + phosphate + 2 H(+). The enzyme catalyses hydrogencarbonate + NH4(+) + 2 ATP = carbamoyl phosphate + 2 ADP + phosphate + 2 H(+). The protein operates within amino-acid biosynthesis; L-arginine biosynthesis; carbamoyl phosphate from bicarbonate: step 1/1. Its pathway is pyrimidine metabolism; UMP biosynthesis via de novo pathway; (S)-dihydroorotate from bicarbonate: step 1/3. In terms of biological role, large subunit of the glutamine-dependent carbamoyl phosphate synthetase (CPSase). CPSase catalyzes the formation of carbamoyl phosphate from the ammonia moiety of glutamine, carbonate, and phosphate donated by ATP, constituting the first step of 2 biosynthetic pathways, one leading to arginine and/or urea and the other to pyrimidine nucleotides. The large subunit (synthetase) binds the substrates ammonia (free or transferred from glutamine from the small subunit), hydrogencarbonate and ATP and carries out an ATP-coupled ligase reaction, activating hydrogencarbonate by forming carboxy phosphate which reacts with ammonia to form carbamoyl phosphate. This chain is Carbamoyl phosphate synthase large chain, found in Xanthomonas campestris pv. campestris (strain ATCC 33913 / DSM 3586 / NCPPB 528 / LMG 568 / P 25).